The chain runs to 715 residues: Protein naked cuticle homolog (715 aa).

Residues 18 to 53 (KKPQPLQFSFTLYDLDGHGKITKDDIAGIVSTIYES) form the EF-hand domain. Positions 256 to 282 (SRAKRKVVRKSRSSRKASKLTDDFSRP) are disordered. A compositionally biased stretch (basic residues) spans 257 to 273 (RAKRKVVRKSRSSRKAS). Positions 305 to 334 (ECWKSSLCRRELIEIIRDSMVKNSLCFQPN) are required for nuclear localization and inhibition of Wnt signaling. The tract at residues 639 to 690 (ELHQSVQQQQGTHQQQQQPQSSVSSPTHHHHHHAGASLLGENSGSSASAAST) is disordered. Composition is skewed to low complexity over residues 642–664 (QSVQ…VSSP) and 673–690 (GASL…AAST).

It belongs to the NKD family.

The protein localises to the cell membrane. Its subcellular location is the cytoplasm. It localises to the nucleus. In terms of biological role, cell autonomous antagonist of the canonical Wnt signaling pathway. May activate a second Wnt signaling pathway that controls planar cell polarity. Required for neuroblast specification. This is Protein naked cuticle homolog from Aedes aegypti (Yellowfever mosquito).